Reading from the N-terminus, the 284-residue chain is Ribose-5-phosphate isomerase (284 aa).

Belongs to the ribose 5-phosphate isomerase family.

The protein localises to the cytoplasm. The catalysed reaction is aldehydo-D-ribose 5-phosphate = D-ribulose 5-phosphate. Its pathway is carbohydrate degradation; pentose phosphate pathway; D-ribose 5-phosphate from D-ribulose 5-phosphate (non-oxidative stage): step 1/1. The polypeptide is Ribose-5-phosphate isomerase (RKI1) (Lodderomyces elongisporus (strain ATCC 11503 / CBS 2605 / JCM 1781 / NBRC 1676 / NRRL YB-4239) (Yeast)).